The sequence spans 189 residues: Crossover junction endodeoxyribonuclease RuvC (189 aa).

Active-site residues include Asp7, Glu68, and Asp141. 3 residues coordinate Mg(2+): Asp7, Glu68, and Asp141.

The protein belongs to the RuvC family. Homodimer which binds Holliday junction (HJ) DNA. The HJ becomes 2-fold symmetrical on binding to RuvC with unstacked arms; it has a different conformation from HJ DNA in complex with RuvA. In the full resolvosome a probable DNA-RuvA(4)-RuvB(12)-RuvC(2) complex forms which resolves the HJ. Mg(2+) serves as cofactor.

It localises to the cytoplasm. It catalyses the reaction Endonucleolytic cleavage at a junction such as a reciprocal single-stranded crossover between two homologous DNA duplexes (Holliday junction).. The RuvA-RuvB-RuvC complex processes Holliday junction (HJ) DNA during genetic recombination and DNA repair. Endonuclease that resolves HJ intermediates. Cleaves cruciform DNA by making single-stranded nicks across the HJ at symmetrical positions within the homologous arms, yielding a 5'-phosphate and a 3'-hydroxyl group; requires a central core of homology in the junction. The consensus cleavage sequence is 5'-(A/T)TT(C/G)-3'. Cleavage occurs on the 3'-side of the TT dinucleotide at the point of strand exchange. HJ branch migration catalyzed by RuvA-RuvB allows RuvC to scan DNA until it finds its consensus sequence, where it cleaves and resolves the cruciform DNA. This chain is Crossover junction endodeoxyribonuclease RuvC, found in Rhodococcus opacus (strain B4).